Here is a 577-residue protein sequence, read N- to C-terminus: Putative laccase-1 (577 aa).

Positions 1 to 28 are cleaved as a signal peptide; that stretch reads MGTAKIPALLWFLLAGLVLALAVNPAHG. 2 Plastocyanin-like domains span residues 37 to 153 and 163 to 316; these read FITE…PKRG and KEIP…YTDS. Residues asparagine 42 and asparagine 83 are each glycosylated (N-linked (GlcNAc...) asparagine). Cu cation is bound by residues histidine 87 and histidine 89. N-linked (GlcNAc...) asparagine glycosylation is present at asparagine 115. Cu cation is bound by residues histidine 132 and histidine 134. Residues asparagine 276, asparagine 304, asparagine 382, and asparagine 402 are each glycosylated (N-linked (GlcNAc...) asparagine). One can recognise a Plastocyanin-like 3 domain in the interval 442 to 561; that stretch reads DINGGGPLLT…DTMFIVKDGK (120 aa). Residues histidine 478, histidine 481, histidine 483, histidine 540, cysteine 541, histidine 542, histidine 546, and methionine 551 each contribute to the Cu cation site.

It belongs to the multicopper oxidase family. Cu cation serves as cofactor.

Its subcellular location is the secreted. The protein localises to the extracellular space. It is found in the apoplast. It carries out the reaction 4 hydroquinone + O2 = 4 benzosemiquinone + 2 H2O. In terms of biological role, lignin degradation and detoxification of lignin-derived products. This is Putative laccase-1 (LAC1) from Oryza sativa subsp. japonica (Rice).